The following is a 130-amino-acid chain: Small ribosomal subunit protein uS9 (130 aa).

It belongs to the universal ribosomal protein uS9 family.

This Lawsonia intracellularis (strain PHE/MN1-00) protein is Small ribosomal subunit protein uS9.